Here is a 206-residue protein sequence, read N- to C-terminus: Uridine kinase (206 aa).

11–18 (GGSASGKT) contacts ATP.

The protein belongs to the uridine kinase family.

It localises to the cytoplasm. It carries out the reaction uridine + ATP = UMP + ADP + H(+). The catalysed reaction is cytidine + ATP = CMP + ADP + H(+). It participates in pyrimidine metabolism; CTP biosynthesis via salvage pathway; CTP from cytidine: step 1/3. The protein operates within pyrimidine metabolism; UMP biosynthesis via salvage pathway; UMP from uridine: step 1/1. This chain is Uridine kinase, found in Lactococcus lactis subsp. cremoris (strain MG1363).